We begin with the raw amino-acid sequence, 356 residues long: Tyrosine recombinase XerS (356 aa).

Residues 16 to 121 (IMPWYVLEYY…ALSSLFKYLT (106 aa)) form the Core-binding (CB) domain. The Tyr recombinase domain maps to 169–354 (EFLEYIDCEY…VNDEQKNALD (186 aa)). Catalysis depends on residues Arg-210, Lys-234, His-306, Arg-309, and His-332. Tyr-341 (O-(3'-phospho-DNA)-tyrosine intermediate) is an active-site residue.

The protein belongs to the 'phage' integrase family. XerS subfamily.

Its subcellular location is the cytoplasm. Its activity is regulated as follows. FtsK is required for recombination. Functionally, site-specific tyrosine recombinase, which acts by catalyzing the cutting and rejoining of the recombining DNA molecules. Essential to convert dimers of the bacterial chromosome into monomers to permit their segregation at cell division. The chain is Tyrosine recombinase XerS from Streptococcus agalactiae serotype Ia (strain ATCC 27591 / A909 / CDC SS700).